Here is a 1837-residue protein sequence, read N- to C-terminus: Zinc finger SWIM domain-containing protein 8 (1837 aa).

3 positions are modified to phosphoserine: S36, S48, and S53. The tract at residues 45 to 65 is disordered; it reads RKQSAGPNSPTGGGGGGGSGG. The span at 55 to 65 shows a compositional bias: gly residues; that stretch reads TGGGGGGGSGG. The SWIM-type zinc finger occupies 172 to 208; that stretch reads YNVAVMFDRCRVTSCSCTCGAGAKWCTHVVALCLFRI. S437 carries the phosphoserine modification. Disordered regions lie at residues 514 to 727, 803 to 823, and 1016 to 1232; these read SRPG…EEDD, NPPD…KVST, and SQTH…VPNQ. 2 stretches are compositionally biased toward basic and acidic residues: residues 523–532 and 566–575; these read GLEESRDRPR and LSAEGGDKAL. S567 bears the Phosphoserine mark. Residues 579–602 are compositionally biased toward gly residues; the sequence is GPGGGKAKALGGAGSGSKGSAGGG. Positions 1019–1040 are enriched in polar residues; the sequence is HKPQTLSSFYSSSRPTTASQRS. A compositionally biased stretch (gly residues) spans 1119–1130; that stretch reads SRGGYNGRGWGS. T1139 bears the Phosphothreonine mark. Polar residues predominate over residues 1144-1159; sequence IDSSAPETTSDSSPTL. S1153, S1156, and S1160 each carry phosphoserine. Positions 1174-1209 are enriched in low complexity; it reads GRGQDSDSISSSSSDSLGSSSSSGSRRASASGGARA. A compositionally biased stretch (basic and acidic residues) spans 1210–1226; that stretch reads KTVEVGRYKGRRPESHA. S1267 carries the post-translational modification Phosphoserine. Disordered stretches follow at residues 1442 to 1464 and 1635 to 1656; these read SASG…GGPG and QPSP…SQPV. Residues 1447–1464 are compositionally biased toward gly residues; sequence RAGGEAGRGMPEGRGGPG. The residue at position 1836 (S1836) is a Phosphoserine.

This sequence belongs to the ZSWIM8 family. In terms of assembly, component of the SCF-like E3 ubiquitin-protein ligase complex which contains CUL3, RBX1, ELOB, ELOC and ZSWIM8. As to quaternary structure, (Microbial infection) Interacts with Zika virus protein NS5; this interaction allows STAT2 binding and subsequent proteasomal degradation.

It localises to the cytoplasm. Its subcellular location is the cytosol. The protein operates within protein modification; protein ubiquitination. In terms of biological role, substrate recognition component of a SCF-like E3 ubiquitin-protein ligase complex that promotes target-directed microRNA degradation (TDMD), a process that mediates degradation of microRNAs (miRNAs). The SCF-like E3 ubiquitin-protein ligase complex acts by catalyzing ubiquitination and subsequent degradation of AGO proteins (AGO1, AGO2, AGO3 and/or AGO4), thereby exposing miRNAs for degradation. Specifically recognizes and binds AGO proteins when they are engaged with a TDMD target. May also act as a regulator of axon guidance: specifically recognizes misfolded ROBO3 and promotes its ubiquitination and subsequent degradation. Plays an essential role for proper embryonic development of heart and lung. Controls protein quality of DAB1, a key signal molecule for brain development, thus protecting its signaling strength. Mechanistically, recognizes intrinsically disordered regions of DAB1 and eliminates misfolded DAB1 that cannot be properly phosphorylated. (Microbial infection) Participates in Zika virus inhibition of IFN signaling by acting as a scaffold protein to connect ZSWIM8/CUL3 ligase complex and STAT2, leading to STAT2 degradation. This is Zinc finger SWIM domain-containing protein 8 from Homo sapiens (Human).